Consider the following 355-residue polypeptide: Serum paraoxonase/arylesterase 1 (355 aa).

A disulfide bond links Cys-42 and Cys-353. Positions 53 and 54 each coordinate Ca(2+). Catalysis depends on His-115, which acts as the Proton acceptor. Residues Ile-117, Asn-168, Asp-169, and Asn-224 each contribute to the Ca(2+) site. Asn-253 carries an N-linked (GlcNAc...) asparagine glycan. Ca(2+) is bound by residues Asp-269 and Asn-270. Residues Asn-270 and Asn-324 are each glycosylated (N-linked (GlcNAc...) asparagine).

Belongs to the paraoxonase family. In terms of assembly, homodimer. Interacts with CLU. It depends on Ca(2+) as a cofactor. Post-translationally, glycosylated. The signal sequence is not cleaved. As to expression, plasma. Associated with HDL.

The protein localises to the secreted. The protein resides in the extracellular space. The enzyme catalyses a phenyl acetate + H2O = a phenol + acetate + H(+). It catalyses the reaction An aryl dialkyl phosphate + H2O = dialkyl phosphate + an aryl alcohol.. It carries out the reaction an N-acyl-L-homoserine lactone + H2O = an N-acyl-L-homoserine + H(+). Hydrolyzes the toxic metabolites of a variety of organophosphorus insecticides. Capable of hydrolyzing a broad spectrum of organophosphate substrates and lactones, and a number of aromatic carboxylic acid esters. Mediates an enzymatic protection of low density lipoproteins against oxidative modification. The protein is Serum paraoxonase/arylesterase 1 (Pon1) of Rattus norvegicus (Rat).